The chain runs to 237 residues: Uridylate kinase (237 aa).

An ATP-binding site is contributed by 9–12 (KLSG). Positions 17–22 (GSQGYG) are involved in allosteric activation by GTP. UMP is bound at residue Gly-51. Gly-52 and Arg-56 together coordinate ATP. UMP-binding positions include Asp-71 and 132-139 (CGNPFFTT). Residues Thr-159, Tyr-165, and Asp-168 each coordinate ATP.

The protein belongs to the UMP kinase family. In terms of assembly, homohexamer.

The protein resides in the cytoplasm. The enzyme catalyses UMP + ATP = UDP + ADP. It functions in the pathway pyrimidine metabolism; CTP biosynthesis via de novo pathway; UDP from UMP (UMPK route): step 1/1. Allosterically activated by GTP. Inhibited by UTP. Functionally, catalyzes the reversible phosphorylation of UMP to UDP. The chain is Uridylate kinase from Synechococcus sp. (strain CC9902).